Consider the following 222-residue polypeptide: UPF0502 protein Shewmr4_1554 (222 aa).

Residues Ser-175 to Arg-193 are compositionally biased toward polar residues. A disordered region spans residues Ser-175–Gln-194.

Belongs to the UPF0502 family.

This is UPF0502 protein Shewmr4_1554 from Shewanella sp. (strain MR-4).